A 272-amino-acid polypeptide reads, in one-letter code: Tryptophan synthase alpha chain (272 aa).

Active-site proton acceptor residues include glutamate 49 and glutamate 60.

It belongs to the TrpA family. As to quaternary structure, tetramer of two alpha and two beta chains.

The enzyme catalyses (1S,2R)-1-C-(indol-3-yl)glycerol 3-phosphate + L-serine = D-glyceraldehyde 3-phosphate + L-tryptophan + H2O. It participates in amino-acid biosynthesis; L-tryptophan biosynthesis; L-tryptophan from chorismate: step 5/5. The alpha subunit is responsible for the aldol cleavage of indoleglycerol phosphate to indole and glyceraldehyde 3-phosphate. The protein is Tryptophan synthase alpha chain of Legionella pneumophila (strain Corby).